A 140-amino-acid chain; its full sequence is 3-hydroxyacyl-[acyl-carrier-protein] dehydratase FabZ (140 aa).

His47 is a catalytic residue.

The protein belongs to the thioester dehydratase family. FabZ subfamily.

Its subcellular location is the cytoplasm. It carries out the reaction a (3R)-hydroxyacyl-[ACP] = a (2E)-enoyl-[ACP] + H2O. Its function is as follows. Involved in unsaturated fatty acids biosynthesis. Catalyzes the dehydration of short chain beta-hydroxyacyl-ACPs and long chain saturated and unsaturated beta-hydroxyacyl-ACPs. The polypeptide is 3-hydroxyacyl-[acyl-carrier-protein] dehydratase FabZ (Streptococcus agalactiae serotype III (strain NEM316)).